Consider the following 374-residue polypeptide: Relaxin-3 receptor 2 (374 aa).

The Extracellular segment spans residues 1-43 (MPTLNTSASPPTFFWANASGGSVLSADDAPMPVKFLALRLMVA). Residues Asn-5 and Asn-17 are each glycosylated (N-linked (GlcNAc...) asparagine). The chain crosses the membrane as a helical span at residues 44–64 (LAYGLVGAIGLLGNLAVLWVL). At 65–78 (SNCARRAPGPPSDT) the chain is on the cytoplasmic side. Residues 79-99 (FVFNLALADLGLALTLPFWAA) form a helical membrane-spanning segment. Topologically, residues 100–116 (ESALDFHWPFGGALCKM) are extracellular. An intrachain disulfide couples Cys-114 to Cys-191. The helical transmembrane segment at 117–137 (VLTATVLNVYASIFLITALSV) threads the bilayer. At 138–154 (ARYWVVAMAAGPGTHLS) the chain is on the cytoplasmic side. The helical transmembrane segment at 155-175 (LFWARIATLAVWAAAALVTVP) threads the bilayer. Residues 176–209 (TAVFGVEGEVCGVRLCLLRFPSRYWLGAYQLQRV) are Extracellular-facing. A helical transmembrane segment spans residues 210–230 (VLAFMVPLGVITTSYLLLLAF). At 231 to 249 (LQRRQRRRQDSRVVARSVR) the chain is on the cytoplasmic side. A helical membrane pass occupies residues 250–270 (ILVASFFLCWFPNHVVTLWGV). Residues 271 to 281 (LVKFDLVPWNS) lie on the Extracellular side of the membrane. Residues 282-302 (TFYTIQTYVFPVTTCLAHSNS) traverse the membrane as a helical segment. Over 303 to 374 (CLNPVLYCLL…LTNLDRGTPG (72 aa)) the chain is Cytoplasmic.

It belongs to the G-protein coupled receptor 1 family. In terms of tissue distribution, expressed in a broader range of tissues including brain, kidney, testis, thymus, placenta, prostate, salivary gland, thyroid and colon.

It localises to the cell membrane. Its function is as follows. High affinity receptor for INSL5. Also acts as a receptor for RLN3/relaxin-3, as well as bradykinin and kallidin. Binding of the ligand inhibit cAMP accumulation. The protein is Relaxin-3 receptor 2 (RXFP4) of Homo sapiens (Human).